The primary structure comprises 397 residues: Putative 3'(2'),5'-bisphosphate nucleotidase, mitochondrial (397 aa).

The transit peptide at 1-16 (MYILDTGARFSAVRFS) directs the protein to the mitochondrion. The active-site Proton acceptor is the Asp-91. 4 residues coordinate Mg(2+): Glu-114, Asp-174, Ile-176, and Asp-177. Thr-179 serves as the catalytic Proton acceptor. Adenosine 3',5'-bisphosphate-binding residues include Thr-179, Ser-305, Lys-308, and Asp-334. Residues Ser-305, Lys-308, and Asp-334 each contribute to the AMP site. Asp-334 serves as a coordination point for Mg(2+).

This sequence belongs to the inositol monophosphatase superfamily. Mg(2+) is required as a cofactor.

Its subcellular location is the mitochondrion. The catalysed reaction is 3'-phosphoadenylyl sulfate + H2O = adenosine 5'-phosphosulfate + phosphate. It catalyses the reaction adenosine 3',5'-bisphosphate + H2O = AMP + phosphate. It carries out the reaction adenosine 2',5'-bisphosphate + H2O = AMP + phosphate. In terms of biological role, phosphatase that converts adenosine 3'-phosphate 5'-phosphosulfate (PAPS) to adenosine 5'-phosphosulfate (APS) and 3'(2')-phosphoadenosine 5'-phosphate (PAP) to AMP. This chain is Putative 3'(2'),5'-bisphosphate nucleotidase, mitochondrial, found in Arabidopsis thaliana (Mouse-ear cress).